The following is a 65-amino-acid chain: Diapause-specific peptide (65 aa).

Positions 1-24 are cleaved as a signal peptide; the sequence is MGAALKMTIFLLIVACAMIATTEA. Disulfide bonds link Cys-31–Cys-45, Cys-35–Cys-57, and Cys-46–Cys-64.

As to expression, highly expressed in the fat body.

Its subcellular location is the secreted. In terms of biological role, has antifungal activity against T.rubrum. Blocks voltage-dependent N-type calcium channels (Cav2.2 / CACNA1B). The polypeptide is Diapause-specific peptide (Gastrophysa atrocyanea (Leaf beetle)).